The sequence spans 361 residues: Lipoyl synthase 1, chloroplastic (361 aa).

C87, C92, C98, C124, C128, C131, and S339 together coordinate [4Fe-4S] cluster. The 222-residue stretch at 107-328 (GEGDGIATAT…KEYGESVGFR (222 aa)) folds into the Radical SAM core domain.

The protein belongs to the radical SAM superfamily. Lipoyl synthase family. [4Fe-4S] cluster serves as cofactor.

It is found in the plastid. Its subcellular location is the chloroplast. It carries out the reaction [[Fe-S] cluster scaffold protein carrying a second [4Fe-4S](2+) cluster] + N(6)-octanoyl-L-lysyl-[protein] + 2 oxidized [2Fe-2S]-[ferredoxin] + 2 S-adenosyl-L-methionine + 4 H(+) = [[Fe-S] cluster scaffold protein] + N(6)-[(R)-dihydrolipoyl]-L-lysyl-[protein] + 4 Fe(3+) + 2 hydrogen sulfide + 2 5'-deoxyadenosine + 2 L-methionine + 2 reduced [2Fe-2S]-[ferredoxin]. Its pathway is protein modification; protein lipoylation via endogenous pathway; protein N(6)-(lipoyl)lysine from octanoyl-[acyl-carrier-protein]: step 2/2. In terms of biological role, catalyzes the radical-mediated insertion of two sulfur atoms into the C-6 and C-8 positions of the octanoyl moiety bound to the lipoyl domains of lipoate-dependent enzymes, thereby converting the octanoylated domains into lipoylated derivatives. In Zea mays (Maize), this protein is Lipoyl synthase 1, chloroplastic.